We begin with the raw amino-acid sequence, 391 residues long: Acetylgalactosaminyl-O-glycosyl-glycoprotein beta-1,3-N-acetylglucosaminyltransferase (391 aa).

Residues 1-11 are Cytoplasmic-facing; that stretch reads MALPSSRRFKS. Residues 12–32 traverse the membrane as a helical; Signal-anchor for type II membrane protein segment; the sequence is PTTLAFFLVGVTLVVLNQWFL. Topologically, residues 33–391 are lumenal; sequence QEHRQEKAKG…TAGEQNPDAH (359 aa). N-linked (GlcNAc...) asparagine glycans are attached at residues N68 and N191.

Belongs to the glycosyltransferase 31 family.

It is found in the golgi apparatus membrane. It catalyses the reaction a 3-O-[N-acetyl-alpha-D-galactosaminyl]-L-threonyl-[protein] + UDP-N-acetyl-alpha-D-glucosamine = a 3-O-[N-acetyl-beta-D-glucosaminyl-(1-&gt;3)-N-acetyl-alpha-D-galactosaminyl]-L-threonyl-[protein] + UDP + H(+). The enzyme catalyses a 3-O-[N-acetyl-alpha-D-galactosaminyl]-L-seryl-[protein] + UDP-N-acetyl-alpha-D-glucosamine = 3-O-[N-acetyl-beta-D-glucosaminyl-(1-&gt;3)-N-acetyl-alpha-D-galactosaminyl]-L-seryl-[protein] + UDP + H(+). The protein operates within protein modification; protein glycosylation. In terms of biological role, beta-1,3-N-acetylglucosaminyltransferase that synthesizes the core 3 structure of the O-glycan, an important precursor in the biosynthesis of mucin-type glycoproteins. Plays an important role in the synthesis of mucin-type O-glycans in digestive organs. The polypeptide is Acetylgalactosaminyl-O-glycosyl-glycoprotein beta-1,3-N-acetylglucosaminyltransferase (B3gnt6) (Mus musculus (Mouse)).